The chain runs to 175 residues: Large ribosomal subunit protein uL10 (175 aa).

It belongs to the universal ribosomal protein uL10 family. As to quaternary structure, part of the ribosomal stalk of the 50S ribosomal subunit. The N-terminus interacts with L11 and the large rRNA to form the base of the stalk. The C-terminus forms an elongated spine to which L12 dimers bind in a sequential fashion forming a multimeric L10(L12)X complex.

Its function is as follows. Forms part of the ribosomal stalk, playing a central role in the interaction of the ribosome with GTP-bound translation factors. In Methylobacterium sp. (strain 4-46), this protein is Large ribosomal subunit protein uL10.